We begin with the raw amino-acid sequence, 811 residues long: Phosphoinositide 3-kinase adapter protein 1 (811 aa).

One can recognise a TIR domain in the interval 8–146; it reads RGCDILIFYS…AVRKAISEDS (139 aa). Positions 10-145 are necessary and sufficient to mediate inhibition of NF-kappa-B downstream of activated TLRs; may mediate interaction with MYD88 and TIRAP; that stretch reads CDILIFYSPD…AAVRKAISED (136 aa). The interval 146–169 is disordered; sequence SGCDSVTDTEPEDERELPFSKQTN. A DBB domain is found at 182–318; that stretch reads VQPDRIRCGA…NIPASGLHLF (137 aa). Residue Tyr-264 is modified to Phosphotyrosine. Phosphotyrosine; by SYK occurs at positions 420, 445, and 460. Phosphotyrosine; by ABL1 is present on Tyr-513. The interval 525-551 is disordered; that stretch reads DLANRPPVPVPRPEASAPGPPPPPDNE. The segment covering 530–550 has biased composition (pro residues); sequence PPVPVPRPEASAPGPPPPPDN. 3 positions are modified to phosphotyrosine; by ABL1: Tyr-553, Tyr-570, and Tyr-594. The residue at position 642 (Ser-642) is a Phosphoserine. A Phosphotyrosine; by ABL1 modification is found at Tyr-694. The interval 702-811 is disordered; it reads VLPARTELRR…PPPPVPPRGR (110 aa). The span at 707–716 shows a compositional bias: basic and acidic residues; sequence TELRRGDWKT. Residues 717–740 show a composition bias toward low complexity; the sequence is DSMSSTASSTSNRSSTRSLLSVSS. At Ser-718 the chain carries Phosphoserine. Positions 801–811 are enriched in pro residues; it reads HPPPPVPPRGR.

As to quaternary structure, homooligomer. Interacts (phosphorylated on tyrosine residues within YXXM motifs) with PIK3R1 (via SH2 domain); required for BCR- and TLR-mediated activation of phosphoinositide 3-kinase. Interacts (via polyproline C-terminal region) with ABI1 (via SH3 domain); the interaction promotes phosphorylation of PIK3AP1 by ABL1. May interact with MYD88 and TIRAP. Post-translationally, constitutively phosphorylated. Phosphorylated on tyrosine residues in C-terminal region by ABL1. Phosphorylated on tyrosine residues within the YXXM motifs by BTK and SYK. Isoform 1 and isoform 2 are phosphorylated on tyrosine residues, most likely within the YXXM motifs, via CD19 activation. Toll-like receptor activation induces appearance of a phosphorylated form associated with membranes. Predominantly expressed in spleen (at protein level). Expressed at lower levels in thymus, liver and lung. Expressed in B-cells, macrophages and natural killer (NK) cells.

The protein localises to the cytoplasm. It is found in the cell membrane. Its function is as follows. Signaling adapter that contributes to B-cell development by linking B-cell receptor (BCR) signaling to the phosphoinositide 3-kinase (PI3K)-Akt signaling pathway. Has a complementary role to the BCR coreceptor CD19, coupling BCR and PI3K activation by providing a docking site for the PI3K subunit PIK3R1. Alternatively, links Toll-like receptor (TLR) signaling to PI3K activation, a process preventing excessive inflammatory cytokine production. Also involved in the activation of PI3K in natural killer cells. May be involved in the survival of mature B-cells via activation of REL. The chain is Phosphoinositide 3-kinase adapter protein 1 (Pik3ap1) from Mus musculus (Mouse).